Consider the following 580-residue polypeptide: Dihydroxy-acid dehydratase (580 aa).

The segment at 1–31 (MPSGSSESPADALRASDSTPDIKPRSRDVTD) is disordered. Residues 20–31 (PDIKPRSRDVTD) show a composition bias toward basic and acidic residues. Residue Cys-69 participates in [2Fe-2S] cluster binding. Asp-101 provides a ligand contact to Mg(2+). Cys-142 serves as a coordination point for [2Fe-2S] cluster. The Mg(2+) site is built by Asp-143 and Lys-144. Lys-144 bears the N6-carboxylysine mark. Position 219 (Cys-219) interacts with [2Fe-2S] cluster. Glu-470 contacts Mg(2+). Ser-496 functions as the Proton acceptor in the catalytic mechanism.

It belongs to the IlvD/Edd family. In terms of assembly, homodimer. The cofactor is [2Fe-2S] cluster. Mg(2+) is required as a cofactor.

The catalysed reaction is (2R)-2,3-dihydroxy-3-methylbutanoate = 3-methyl-2-oxobutanoate + H2O. It catalyses the reaction (2R,3R)-2,3-dihydroxy-3-methylpentanoate = (S)-3-methyl-2-oxopentanoate + H2O. It participates in amino-acid biosynthesis; L-isoleucine biosynthesis; L-isoleucine from 2-oxobutanoate: step 3/4. It functions in the pathway amino-acid biosynthesis; L-valine biosynthesis; L-valine from pyruvate: step 3/4. In terms of biological role, functions in the biosynthesis of branched-chain amino acids. Catalyzes the dehydration of (2R,3R)-2,3-dihydroxy-3-methylpentanoate (2,3-dihydroxy-3-methylvalerate) into 2-oxo-3-methylpentanoate (2-oxo-3-methylvalerate) and of (2R)-2,3-dihydroxy-3-methylbutanoate (2,3-dihydroxyisovalerate) into 2-oxo-3-methylbutanoate (2-oxoisovalerate), the penultimate precursor to L-isoleucine and L-valine, respectively. The sequence is that of Dihydroxy-acid dehydratase from Mycobacterium sp. (strain JLS).